The sequence spans 459 residues: Cysteine--tRNA ligase (459 aa).

Cys-27 lines the Zn(2+) pocket. Positions 29-39 (VTVYDDCHIGH) match the 'HIGH' region motif. The Zn(2+) site is built by Cys-208, His-233, and Glu-237. Residues 265–269 (KMSKS) carry the 'KMSKS' region motif. Lys-268 serves as a coordination point for ATP.

Belongs to the class-I aminoacyl-tRNA synthetase family. In terms of assembly, monomer. It depends on Zn(2+) as a cofactor.

The protein resides in the cytoplasm. The enzyme catalyses tRNA(Cys) + L-cysteine + ATP = L-cysteinyl-tRNA(Cys) + AMP + diphosphate. The sequence is that of Cysteine--tRNA ligase from Francisella tularensis subsp. mediasiatica (strain FSC147).